The following is a 238-amino-acid chain: RNA-binding protein pno1 (238 aa).

The 50-residue stretch at Gln162–Ile211 folds into the KH domain.

The protein belongs to the PNO1 family.

Its subcellular location is the nucleus. It localises to the nucleolus. This Drosophila pseudoobscura pseudoobscura (Fruit fly) protein is RNA-binding protein pno1 (l(1)G0004).